Consider the following 357-residue polypeptide: Transcription factor unc-86 (357 aa).

The POU-IV box signature appears at 35–44 (RAAQVALADI). The POU-specific domain occupies 155-232 (DMDTDPRQLE…ILHSWLEKAE (78 aa)). The segment at residues 253–312 (KKRKRTSIAAPEKRELEQFFKQQPRPSGERIASIADRLDLKKNVVRVWFCNQRQKQKRDF) is a DNA-binding region (homeobox).

The protein belongs to the POU transcription factor family. Class-4 subfamily. In terms of assembly, interacts with mec-3; the heterooligomer binds to the promoters of mec-3, mec-4 and mec-7. As to expression, specific to neurons and neuroblasts. Expressed in CEM head neurons and in IL2, URA, URB, URX and URY neurons. Not expressed in olfactory sensory neurons but expressed in AIZ interneurons.

It is found in the nucleus. Functionally, transcription factor required for correct cell fate determination and differentiation in diverse neuronal cell lineages where it plays a role in specifying the fate of daughter cells during cell divisions. Involved in sensory neuron production and function. Binds both alone and with mec-3 to the mec-3 promoter to initiate and maintain mec-3 expression which is required for sensory neuron differentiation. In addition, binds both alone and with mec-3 to the promoters of mec-4 and mec-7 which act to regulate sensory neuron function. Involved in determining the identity of the serotonergic NSM neurons and the cholinergic IL2 sensory and URA motor neurons. Promotes expression of the cfi-1 transcription factor in the URA and IL2 neurons which in turn activates normal URA and IL2 gene expression. Required to determine the identity of BDU sensory neurons in concert with transcription factor unc-86, regulating expression of a number of genes, including transcription factors ceh-14 and ahr-1, neuropeptides flp-10, nlp-1 and nlp-15, and tyramine receptor-encoding ser-2. Regulates expression of a number of genes in NSM neurons including bas-1, cat-1, dop-3, mgl-3, nlp-13, scd-2 and ptps-1. In the IL2 neurons, required for expression of cho-1, gcy-19, klp-6, lag-2, unc-5 and unc-17. Promotes expression of pkd-2 in the male-specific CEM head neurons. Required for dauer-specific branching of IL2Q neurons and nictation behavior. Controls both the timing and direction of axon outgrowth in HSN neurons. Plays a role in serotonin production by regulating expression of the tryptophan hydrolase tph-1 which catalyzes serotonin synthesis, in the AIM, NSM, HSN and RIH neurons. Involved in regulation of lin-11 expression in the AIZ interneurons, the major interneurons of the olfactory pathway, and is required for odortaxis behavior. Involved in neurite pruning between AIM neurons during larval development by regulating the expression of transcription factor mbr-1. Required for correct localization of unc-40. This Caenorhabditis elegans protein is Transcription factor unc-86 (unc-86).